The sequence spans 269 residues: 4-hydroxy-tetrahydrodipicolinate reductase (269 aa).

9-14 serves as a coordination point for NAD(+); that stretch reads GVAGRM. Arginine 36 provides a ligand contact to NADP(+). NAD(+) contacts are provided by residues 99 to 101 and 123 to 126; these read GTT and APNM. Histidine 156 functions as the Proton donor/acceptor in the catalytic mechanism. Histidine 157 contacts (S)-2,3,4,5-tetrahydrodipicolinate. Lysine 160 acts as the Proton donor in catalysis. 166–167 serves as a coordination point for (S)-2,3,4,5-tetrahydrodipicolinate; it reads GT.

It belongs to the DapB family.

The protein resides in the cytoplasm. The enzyme catalyses (S)-2,3,4,5-tetrahydrodipicolinate + NAD(+) + H2O = (2S,4S)-4-hydroxy-2,3,4,5-tetrahydrodipicolinate + NADH + H(+). It catalyses the reaction (S)-2,3,4,5-tetrahydrodipicolinate + NADP(+) + H2O = (2S,4S)-4-hydroxy-2,3,4,5-tetrahydrodipicolinate + NADPH + H(+). The protein operates within amino-acid biosynthesis; L-lysine biosynthesis via DAP pathway; (S)-tetrahydrodipicolinate from L-aspartate: step 4/4. Functionally, catalyzes the conversion of 4-hydroxy-tetrahydrodipicolinate (HTPA) to tetrahydrodipicolinate. This is 4-hydroxy-tetrahydrodipicolinate reductase from Methylococcus capsulatus (strain ATCC 33009 / NCIMB 11132 / Bath).